The primary structure comprises 129 residues: UPF0102 protein amb4503 (129 aa).

It belongs to the UPF0102 family.

The protein is UPF0102 protein amb4503 of Paramagnetospirillum magneticum (strain ATCC 700264 / AMB-1) (Magnetospirillum magneticum).